The sequence spans 768 residues: DWHLDMQLTGKVVLSAAALLLVTVAYRLYKSRPAPAQRWGGNAQAEAKEEAQGSGQPAVQEASPGVLLTGPRRRRSSKGAEAPQGCSCENPRGPYVLVTGATSTDRKSQRKGSGEERGGQSSDSEQVPPCCRGQETRTAVSGNPDPPHLPRLGSEPNSSPAGLIAAADGSCAGGELSPPQDSKPPEHPGLGQLEPPHCHHPAPLQGSSDMNQSWVFTRVIGVNREEAGALEAASDVGLTLHQQEGAPNASYTFSSIARVRMEENFIQKVEGVEPRLKGKVYDYYVESTSQAIFQGRLAPRTAALTEVPSPRPPPRSLGTGAASGGQAGDTKGAAERAASPQPGPSPSTRGFSRKESLLQIAENPELQLQPDGFWLPAPPCPDPGALPGSGRSSQEPHVQLVAGTNFFHIPLTSASAPQVHLDLGNCYEVLTLAKRQNLEALKEAAYKVMSENYLQVLRSPDIYGCLSGAERELILQRRLQGRQYLVVADVSPKEDSGGLCCYDDELDVWRPLARLPPEAVSRGCAICSLFNYLFVVSGCQGPGHQPSSRVFCYNPLTGIWSEVCPLNQARPHCRLVALDGHLYAIGGECLNSVERYDPRLDRWDFAPPLPNDTFALAHTATACAKEIFVTGGSLRFLLFRFSAQEQRWWAGPAGGSKDRTAEMVAVNGFLYRFDLNRSLGIAVYRCSASTRLWYECATYRTPYPDAFQCAVVDNLIYCVGRRSTLCFLADSVSPRFVPKELRSFPAPQGTLLPTVLTLPTPDLPQTRV.

The helical transmembrane segment at 12–29 (VVLSAAALLLVTVAYRLY) threads the bilayer. The interval 35-210 (PAQRWGGNAQ…PAPLQGSSDM (176 aa)) is disordered. Ser-77 carries the post-translational modification Phosphoserine. Positions 104–118 (TDRKSQRKGSGEERG) are enriched in basic and acidic residues. An N-linked (GlcNAc...) asparagine glycan is attached at Asn-248. The tract at residues 304-352 (LTEVPSPRPPPRSLGTGAASGGQAGDTKGAAERAASPQPGPSPSTRGFS) is disordered. The Kelch 1 repeat unit spans residues 319-365 (TGAASGGQAGDTKGAAERAASPQPGPSPSTRGFSRKESLLQIAENPE). A Phosphoserine modification is found at Ser-356. Residues 371 to 395 (DGFWLPAPPCPDPGALPGSGRSSQE) are disordered. Kelch repeat units lie at residues 483 to 529 (QYLV…ICSL), 532 to 580 (YLFV…ALDG), 581 to 623 (HLYA…ATAC), and 626 to 668 (EIFV…AVNG).

The protein resides in the membrane. The polypeptide is Kelch domain-containing protein 7A (KLHDC7A) (Pongo abelii (Sumatran orangutan)).